Reading from the N-terminus, the 342-residue chain is tRNA N6-adenosine threonylcarbamoyltransferase (342 aa).

The Fe cation site is built by His111 and His115. Substrate-binding positions include 134–138, Asp167, Gly180, and Asn277; that span reads LVSGG. Asp305 serves as a coordination point for Fe cation.

The protein belongs to the KAE1 / TsaD family. It depends on Fe(2+) as a cofactor.

The protein localises to the cytoplasm. The enzyme catalyses L-threonylcarbamoyladenylate + adenosine(37) in tRNA = N(6)-L-threonylcarbamoyladenosine(37) in tRNA + AMP + H(+). Its function is as follows. Required for the formation of a threonylcarbamoyl group on adenosine at position 37 (t(6)A37) in tRNAs that read codons beginning with adenine. Is involved in the transfer of the threonylcarbamoyl moiety of threonylcarbamoyl-AMP (TC-AMP) to the N6 group of A37, together with TsaE and TsaB. TsaD likely plays a direct catalytic role in this reaction. The sequence is that of tRNA N6-adenosine threonylcarbamoyltransferase from Haemophilus influenzae (strain ATCC 51907 / DSM 11121 / KW20 / Rd).